The sequence spans 212 residues: Peptide methionine sulfoxide reductase MsrA (212 aa).

Cys52 is a catalytic residue.

The protein belongs to the MsrA Met sulfoxide reductase family.

It catalyses the reaction L-methionyl-[protein] + [thioredoxin]-disulfide + H2O = L-methionyl-(S)-S-oxide-[protein] + [thioredoxin]-dithiol. The enzyme catalyses [thioredoxin]-disulfide + L-methionine + H2O = L-methionine (S)-S-oxide + [thioredoxin]-dithiol. Has an important function as a repair enzyme for proteins that have been inactivated by oxidation. Catalyzes the reversible oxidation-reduction of methionine sulfoxide in proteins to methionine. The chain is Peptide methionine sulfoxide reductase MsrA from Salmonella newport (strain SL254).